Reading from the N-terminus, the 135-residue chain is HTH-type transcriptional regulator DicA (135 aa).

In terms of domain architecture, HTH cro/C1-type spans 12 to 66 (IRYRRKNLKHTQRSLAKALKISHVSVSQWERGDSEPTGKNLFALSKVLQCSPTWI). The segment at residues 23-42 (QRSLAKALKISHVSVSQWER) is a DNA-binding region (H-T-H motif).

In terms of biological role, this protein is a repressor of division inhibition gene dicB. The chain is HTH-type transcriptional regulator DicA (dicA) from Escherichia coli (strain K12).